The chain runs to 76 residues: Small ribosomal subunit protein bS16 (76 aa).

The protein belongs to the bacterial ribosomal protein bS16 family.

This Sulfurovum sp. (strain NBC37-1) protein is Small ribosomal subunit protein bS16.